The primary structure comprises 601 residues: Glutamine--fructose-6-phosphate aminotransferase [isomerizing] (601 aa).

C2 (nucleophile; for GATase activity) is an active-site residue. The 217-residue stretch at 2–218 folds into the Glutamine amidotransferase type-2 domain; that stretch reads CGIVGYIGYD…DHEIVIVKKD (217 aa). 2 SIS domains span residues 284-423 and 453-591; these read IIND…EHGR and IATD…VDKP. K596 acts as the For Fru-6P isomerization activity in catalysis.

In terms of assembly, homodimer.

It localises to the cytoplasm. The enzyme catalyses D-fructose 6-phosphate + L-glutamine = D-glucosamine 6-phosphate + L-glutamate. In terms of biological role, catalyzes the first step in hexosamine metabolism, converting fructose-6P into glucosamine-6P using glutamine as a nitrogen source. The protein is Glutamine--fructose-6-phosphate aminotransferase [isomerizing] of Staphylococcus aureus (strain MRSA252).